A 305-amino-acid chain; its full sequence is UDP-N-acetylenolpyruvoylglucosamine reductase 2 (305 aa).

Residues valine 33–glycine 197 form the FAD-binding PCMH-type domain. Arginine 176 is an active-site residue. Residue serine 226 is the Proton donor of the active site. Residue glutamate 296 is part of the active site.

The protein belongs to the MurB family. Requires FAD as cofactor.

It localises to the cytoplasm. It catalyses the reaction UDP-N-acetyl-alpha-D-muramate + NADP(+) = UDP-N-acetyl-3-O-(1-carboxyvinyl)-alpha-D-glucosamine + NADPH + H(+). It functions in the pathway cell wall biogenesis; peptidoglycan biosynthesis. Cell wall formation. The chain is UDP-N-acetylenolpyruvoylglucosamine reductase 2 from Bacillus thuringiensis subsp. konkukian (strain 97-27).